A 178-amino-acid polypeptide reads, in one-letter code: NAD(P)H-quinone oxidoreductase subunit J (178 aa).

The protein belongs to the complex I 30 kDa subunit family. In terms of assembly, NDH-1 can be composed of about 15 different subunits; different subcomplexes with different compositions have been identified which probably have different functions.

It localises to the cellular thylakoid membrane. The enzyme catalyses a plastoquinone + NADH + (n+1) H(+)(in) = a plastoquinol + NAD(+) + n H(+)(out). It carries out the reaction a plastoquinone + NADPH + (n+1) H(+)(in) = a plastoquinol + NADP(+) + n H(+)(out). Its function is as follows. NDH-1 shuttles electrons from an unknown electron donor, via FMN and iron-sulfur (Fe-S) centers, to quinones in the respiratory and/or the photosynthetic chain. The immediate electron acceptor for the enzyme in this species is believed to be plastoquinone. Couples the redox reaction to proton translocation, and thus conserves the redox energy in a proton gradient. Cyanobacterial NDH-1 also plays a role in inorganic carbon-concentration. The chain is NAD(P)H-quinone oxidoreductase subunit J from Crocosphaera subtropica (strain ATCC 51142 / BH68) (Cyanothece sp. (strain ATCC 51142)).